Consider the following 338-residue polypeptide: MSDRLKPLIGTAATRPLSREEAEFAFECLFEGEATPAQMGGLLMALRTRGETVDEYAAAASVMRAKCHKVRAPHGAIDIVGTGGDGKGTLNISTATAFVVAGAGVPVAKHGNRNLSSKSGAADALTEMGLNVMIGPEQVEACLLEAGIGFMMAPMHHPAMRHVGPVRAELGTRTIFNILGPLTNPAGVKRQLTGAFSPDLIRPMAEVLSALGSEKAWLVHGGDGTDELAISAASKVAALEGGQIREFELHPEEAGLPVHPFEEIVGGTPAENAQAFHALLDGAPGAYRDAVLLNAAAALVVADRAADLREGVEIATDSILSGAAKAKVALLARLTNAA.

Residues Gly81, 84-85 (GD), Thr89, 91-94 (NIST), 109-117 (KHGNRNLSS), and Ala121 contribute to the 5-phospho-alpha-D-ribose 1-diphosphate site. Gly81 contributes to the anthranilate binding site. Ser93 is a binding site for Mg(2+). Asn112 lines the anthranilate pocket. Residue Arg167 coordinates anthranilate. Residues Asp226 and Glu227 each contribute to the Mg(2+) site.

Belongs to the anthranilate phosphoribosyltransferase family. As to quaternary structure, homodimer. It depends on Mg(2+) as a cofactor.

It carries out the reaction N-(5-phospho-beta-D-ribosyl)anthranilate + diphosphate = 5-phospho-alpha-D-ribose 1-diphosphate + anthranilate. The protein operates within amino-acid biosynthesis; L-tryptophan biosynthesis; L-tryptophan from chorismate: step 2/5. In terms of biological role, catalyzes the transfer of the phosphoribosyl group of 5-phosphorylribose-1-pyrophosphate (PRPP) to anthranilate to yield N-(5'-phosphoribosyl)-anthranilate (PRA). This Cereibacter sphaeroides (strain KD131 / KCTC 12085) (Rhodobacter sphaeroides) protein is Anthranilate phosphoribosyltransferase.